Consider the following 1057-residue polypeptide: Desmoglein-1-alpha (1057 aa).

Residues 1–23 (MDWHSFRIAALLLTSLVVLEVNS) form the signal peptide. Positions 24 to 49 (EFQIQVRDHNAKNGTIKWHSIRRQKR) are excised as a propeptide. Cadherin domains follow at residues 50–157 (EWIK…PPVF), 158–269 (SMTT…IPYL), 270–389 (EQSS…RPGS), and 386–493 (RPGS…TGSE). At 50 to 564 (EWIKFAAACR…LYGDNVHFGP (515 aa)) the chain is on the extracellular side. 2 N-linked (GlcNAc...) asparagine glycosylation sites follow: asparagine 110 and asparagine 180. The disordered stretch occupies residues 490-552 (TGSESGGSSS…FQGDPDETLE (63 aa)). The span at 510 to 525 (NGYQGTSSTENPQRVT) shows a compositional bias: polar residues. A helical transmembrane segment spans residues 565–585 (AGIGLLIMGFLVLGLVPFLLI). At 586–1057 (CCDCGGAPGG…TKYNTVQYSK (472 aa)) the chain is on the cytoplasmic side. Desmoglein repeat repeat units follow at residues 832–858 (AYHS…TVRE), 859–888 (SYTT…ERVV), 889–918 (GPIS…ERVI), 919–946 (APGS…ERVI), and 947–975 (QPTS…ERVV).

In terms of assembly, binds to JUP/plakoglobin. Interacts with PKP2. Interacts with DSC3; there is evidence to suggest that the interaction promotes cell-cell adhesion of keratinocytes. As to expression, expressed in testis.

Its subcellular location is the cell membrane. The protein localises to the cell junction. The protein resides in the desmosome. It is found in the cytoplasm. It localises to the nucleus. Functionally, component of intercellular desmosome junctions. Involved in the interaction of plaque proteins and intermediate filaments mediating cell-cell adhesion. This chain is Desmoglein-1-alpha (Dsg1a), found in Mus musculus (Mouse).